Reading from the N-terminus, the 164-residue chain is Dihydrofolate reductase (164 aa).

The DHFR domain occupies 2 to 162 (NISIIVAMSQ…FYVTFKILKK (161 aa)). Residue 6-8 (IVA) coordinates substrate. NADP(+)-binding positions include 7 to 8 (VA) and 15 to 20 (IGQKNS). Asp-28 is a binding site for substrate. NADP(+) is bound at residue 44–47 (GRKT). Arg-58 lines the substrate pocket. Residues 63 to 66 (LTRQ) and 96 to 101 (IGGSNL) each bind NADP(+). Thr-115 serves as a coordination point for substrate.

Belongs to the dihydrofolate reductase family.

The catalysed reaction is (6S)-5,6,7,8-tetrahydrofolate + NADP(+) = 7,8-dihydrofolate + NADPH + H(+). Its pathway is cofactor biosynthesis; tetrahydrofolate biosynthesis; 5,6,7,8-tetrahydrofolate from 7,8-dihydrofolate: step 1/1. Key enzyme in folate metabolism. Catalyzes an essential reaction for de novo glycine and purine synthesis, and for DNA precursor synthesis. The polypeptide is Dihydrofolate reductase (folA) (Buchnera aphidicola subsp. Baizongia pistaciae (strain Bp)).